Here is a 114-residue protein sequence, read N- to C-terminus: Nucleoid-associated protein NT01CX_0824 (114 aa).

This sequence belongs to the YbaB/EbfC family. Homodimer.

Its subcellular location is the cytoplasm. It is found in the nucleoid. Binds to DNA and alters its conformation. May be involved in regulation of gene expression, nucleoid organization and DNA protection. The polypeptide is Nucleoid-associated protein NT01CX_0824 (Clostridium novyi (strain NT)).